The sequence spans 398 residues: tRNA (guanine-N(7)-)-methyltransferase (398 aa).

Residues Glu124, Glu149, and Asp176 each coordinate S-adenosyl-L-methionine. Position 232 (Asp232) interacts with substrate.

Belongs to the class I-like SAM-binding methyltransferase superfamily. TrmB family.

It catalyses the reaction guanosine(46) in tRNA + S-adenosyl-L-methionine = N(7)-methylguanosine(46) in tRNA + S-adenosyl-L-homocysteine. It participates in tRNA modification; N(7)-methylguanine-tRNA biosynthesis. Functionally, catalyzes the formation of N(7)-methylguanine at position 46 (m7G46) in tRNA. In Helicobacter acinonychis (strain Sheeba), this protein is tRNA (guanine-N(7)-)-methyltransferase.